A 242-amino-acid chain; its full sequence is Glutamine transport ATP-binding protein GlnQ (242 aa).

The ABC transporter domain maps to 2–236 (IYFHQVNKYY…PKEERAKVFL (235 aa)). 34–41 (GPSGSGKS) is a binding site for ATP.

Belongs to the ABC transporter superfamily.

The protein localises to the cell membrane. In terms of biological role, part of the binding-protein-dependent transport system for glutamine. Probably responsible for energy coupling to the transport system. This Geobacillus stearothermophilus (Bacillus stearothermophilus) protein is Glutamine transport ATP-binding protein GlnQ (glnQ).